We begin with the raw amino-acid sequence, 344 residues long: L-rhamnose-proton symporter (344 aa).

The next 10 helical transmembrane spans lie at proline 4–alanine 24, tryptophan 38–leucine 58, phenylalanine 68–isoleucine 88, methionine 101–leucine 121, threonine 137–leucine 157, leucine 175–alanine 195, leucine 214–isoleucine 234, leucine 255–phenylalanine 275, isoleucine 290–phenylalanine 310, and leucine 324–valine 344.

It belongs to the L-rhamnose transporter (TC 2.A.7.6) family.

Its subcellular location is the cell inner membrane. The catalysed reaction is L-rhamnopyranose(in) + H(+)(in) = L-rhamnopyranose(out) + H(+)(out). Uptake of L-rhamnose across the cytoplasmic membrane with the concomitant transport of protons into the cell (symport system). The polypeptide is L-rhamnose-proton symporter (Pectobacterium atrosepticum (strain SCRI 1043 / ATCC BAA-672) (Erwinia carotovora subsp. atroseptica)).